Consider the following 124-residue polypeptide: Ribonuclease pancreatic (124 aa).

The segment covering 1–13 (KESAAAKFERQHM) has biased composition (basic and acidic residues). The tract at residues 1-23 (KESAAAKFERQHMDPSASSISSS) is disordered. Substrate is bound by residues Lys-7 and Arg-10. His-12 serves as the catalytic Proton acceptor. Cystine bridges form between Cys-26-Cys-84, Cys-40-Cys-95, Cys-58-Cys-110, and Cys-65-Cys-72. Asn-34 is a glycosylation site (N-linked (GlcNAc...) asparagine). Substrate contacts are provided by residues 41–45 (KPVNT), Lys-66, and Arg-85. His-119 serves as the catalytic Proton donor.

Belongs to the pancreatic ribonuclease family. Monomer. Interacts with and forms tight 1:1 complexes with RNH1. Dimerization of two such complexes may occur. Interaction with RNH1 inhibits this protein. In terms of tissue distribution, pancreas.

It localises to the secreted. The enzyme catalyses an [RNA] containing cytidine + H2O = an [RNA]-3'-cytidine-3'-phosphate + a 5'-hydroxy-ribonucleotide-3'-[RNA].. It catalyses the reaction an [RNA] containing uridine + H2O = an [RNA]-3'-uridine-3'-phosphate + a 5'-hydroxy-ribonucleotide-3'-[RNA].. Its function is as follows. Endonuclease that catalyzes the cleavage of RNA on the 3' side of pyrimidine nucleotides. Acts on single-stranded and double-stranded RNA. The sequence is that of Ribonuclease pancreatic (RNASE1) from Alces alces alces (European moose).